Consider the following 263-residue polypeptide: Acyl-[acyl-carrier-protein]--UDP-N-acetylglucosamine O-acyltransferase (263 aa).

The protein belongs to the transferase hexapeptide repeat family. LpxA subfamily. Homotrimer.

Its subcellular location is the cytoplasm. The catalysed reaction is a (3R)-hydroxyacyl-[ACP] + UDP-N-acetyl-alpha-D-glucosamine = a UDP-3-O-[(3R)-3-hydroxyacyl]-N-acetyl-alpha-D-glucosamine + holo-[ACP]. The protein operates within glycolipid biosynthesis; lipid IV(A) biosynthesis; lipid IV(A) from (3R)-3-hydroxytetradecanoyl-[acyl-carrier-protein] and UDP-N-acetyl-alpha-D-glucosamine: step 1/6. Its function is as follows. Involved in the biosynthesis of lipid A, a phosphorylated glycolipid that anchors the lipopolysaccharide to the outer membrane of the cell. The protein is Acyl-[acyl-carrier-protein]--UDP-N-acetylglucosamine O-acyltransferase of Stenotrophomonas maltophilia (strain K279a).